The following is a 179-amino-acid chain: MEHFRGTTILSVRRQEQVVIGGDGQVSMNNIVMKGNARKVRRLFHNQVIAGFAGGTADAFTLFERFEAKLEKHQGNLTRAAVELAKDWRSDRSLRRLEALLAVADHKASYVISGNGDVIEPEYGLIAIGSGGPYAQAAARALLENTDFSARVIVEKALSIAADICIYTNTHLTVEELSG.

The active site involves T7. The Na(+) site is built by A162, C165, and T168.

This sequence belongs to the peptidase T1B family. HslV subfamily. A double ring-shaped homohexamer of HslV is capped on each side by a ring-shaped HslU homohexamer. The assembly of the HslU/HslV complex is dependent on binding of ATP.

The protein localises to the cytoplasm. It catalyses the reaction ATP-dependent cleavage of peptide bonds with broad specificity.. Allosterically activated by HslU binding. Functionally, protease subunit of a proteasome-like degradation complex believed to be a general protein degrading machinery. This Nitrosococcus oceani (strain ATCC 19707 / BCRC 17464 / JCM 30415 / NCIMB 11848 / C-107) protein is ATP-dependent protease subunit HslV.